Consider the following 279-residue polypeptide: Lectin 9 (279 aa).

The first 23 residues, Met1–Ser23, serve as a signal peptide directing secretion. Asn116, Asn139, Asn235, and Asn272 each carry an N-linked (GlcNAc...) asparagine glycan.

It belongs to the leguminous lectin family.

May be involved in arbuscular mycorrhizal (AM) symbiosis with AM fungi. The protein is Lectin 9 of Medicago truncatula (Barrel medic).